A 214-amino-acid chain; its full sequence is Charged multivesicular body protein 2b (214 aa).

Positions 16–55 form a coiled coil; it reads EQNKELRGTQRAITRDRAALEKQEKQLEMEIKKMAKAGNK. A disordered region spans residues 178-203; the sequence is MAKAPSAAKGLPSTSASKSSGISDEE. Residues 189–199 show a composition bias toward polar residues; sequence PSTSASKSSGI. An MIT-interacting motif motif is present at residues 202 to 212; the sequence is EEIERQLKALG.

The protein belongs to the SNF7 family. Probable core component of the endosomal sorting required for transport complex III (ESCRT-III). ESCRT-III components are thought to multimerize to form a flat lattice on the perimeter membrane of the endosome.

The protein localises to the cytoplasm. It localises to the cytosol. The protein resides in the late endosome membrane. Its function is as follows. Probable core component of the endosomal sorting required for transport complex III (ESCRT-III) which is involved in multivesicular bodies (MVBs) formation and sorting of endosomal cargo proteins into MVBs. MVBs contain intraluminal vesicles (ILVs) that are generated by invagination and scission from the limiting membrane of the endosome and mostly are delivered to lysosomes enabling degradation of membrane proteins, such as stimulated growth factor receptors, lysosomal enzymes and lipids. This Xenopus tropicalis (Western clawed frog) protein is Charged multivesicular body protein 2b (chmp2b).